A 404-amino-acid chain; its full sequence is Argininosuccinate synthase (404 aa).

ATP-binding positions include 13–21 (AYSGGLDTS) and A41. Positions 93 and 98 each coordinate L-citrulline. Residue G123 coordinates ATP. L-aspartate contacts are provided by T125, N129, and D130. N129 is an L-citrulline binding site. L-citrulline is bound by residues R133, S182, S191, E267, and Y279.

This sequence belongs to the argininosuccinate synthase family. Type 1 subfamily. In terms of assembly, homotetramer.

Its subcellular location is the cytoplasm. It carries out the reaction L-citrulline + L-aspartate + ATP = 2-(N(omega)-L-arginino)succinate + AMP + diphosphate + H(+). It functions in the pathway amino-acid biosynthesis; L-arginine biosynthesis; L-arginine from L-ornithine and carbamoyl phosphate: step 2/3. The polypeptide is Argininosuccinate synthase (Moritella profunda).